A 155-amino-acid chain; its full sequence is Troponin C, isoform 2 (155 aa).

EF-hand domains follow at residues 11–46 (EQIAVLQKAFNSFDHQKTGSIPTEMVADILRLMGQP), 47–82 (FDRQILDELIDEVDEDKSGRLEFEEFVQLAAKFIVE), 87–122 (AMQKELREAFRLYDKQGNGYIPTSCLKEILKELDDQ), and 123–155 (LTEQELDIMIEEIDSDGSGTVDFDEFMEMMTGE). D60, D62, S64, R66, and E71 together coordinate Ca(2+). Residues D136, D138, S140, T142, and E147 each coordinate Ca(2+).

This sequence belongs to the troponin C family. In terms of tissue distribution, accumulates almost exclusively in larval muscles.

This Drosophila melanogaster (Fruit fly) protein is Troponin C, isoform 2 (TpnC47D).